The sequence spans 318 residues: Ferrochelatase (318 aa).

Fe cation-binding residues include His-194 and Glu-275.

This sequence belongs to the ferrochelatase family.

Its subcellular location is the cytoplasm. It carries out the reaction heme b + 2 H(+) = protoporphyrin IX + Fe(2+). Its pathway is porphyrin-containing compound metabolism; protoheme biosynthesis; protoheme from protoporphyrin-IX: step 1/1. In terms of biological role, catalyzes the ferrous insertion into protoporphyrin IX. This chain is Ferrochelatase, found in Xanthomonas axonopodis pv. citri (strain 306).